A 283-amino-acid chain; its full sequence is Phytanoyl-CoA dioxygenase (283 aa).

2-oxoglutarate-binding positions include Lys-99, Met-138, 153 to 155, and Trp-170; that span reads HQD. Fe cation-binding residues include His-153 and Asp-155. Fe cation is bound at residue His-238. The 2-oxoglutarate site is built by Ser-240 and Arg-249.

It belongs to the PhyH family. The cofactor is Fe cation. It depends on L-ascorbate as a cofactor.

The enzyme catalyses phytanoyl-CoA + 2-oxoglutarate + O2 = 2-hydroxyphytanoyl-CoA + succinate + CO2. Its pathway is lipid metabolism; fatty acid metabolism. Converts phytanoyl-CoA to 2-hydroxyphytanoyl-CoA. This is Phytanoyl-CoA dioxygenase from Arabidopsis thaliana (Mouse-ear cress).